The chain runs to 228 residues: Lactate utilization protein A (228 aa).

It belongs to the LutA/YkgE family.

Its function is as follows. Is involved in L-lactate degradation and allows cells to grow with lactate as the sole carbon source. The polypeptide is Lactate utilization protein A (Lysinibacillus sphaericus (strain C3-41)).